The primary structure comprises 1462 residues: Gag-Pol polyprotein (1462 aa).

Gly-2 is lipidated: N-myristoyl glycine; by host. The interaction with Gp41 stretch occupies residues 7 to 31; sequence VLRGKKADELEKVRLRPNGKKRYRL. Positions 16-22 match the Nuclear export signal motif; sequence LEKVRLR. The Nuclear localization signal motif lies at 26–32; sequence KKRYRLK. Residues 191-228 are interaction with human PPIA/CYPA and NUP153; the sequence is NCVGDHQAAMQIIREIINEEAADWDAQHPIPGPLPAGQ. A dimerization/Multimerization of capsid protein p24 region spans residues 279-365; sequence YNPTNILDVK…GGPSQKARLM (87 aa). CCHC-type zinc fingers lie at residues 389–406 and 410–427; these read IRCWNCGKEGHSAKQCRA and QGCWKCGKSGHIMANCPE. The interval 433 to 509 is disordered; sequence LDGPTGKAAP…DAPQRGDRGL (77 aa). The segment covering 448–465 has biased composition (polar residues); that stretch reads PSSSGADTNSTPNRSSSG. Composition is skewed to basic and acidic residues over residues 472–482 and 497–507; these read AAREKAERAEG and AGRDAPQRGDR. A dimerization of protease region spans residues 512–516; it reads PQFSL. Positions 532–601 constitute a Peptidase A2 domain; sequence EVLLDTGADD…PINIFGRNIL (70 aa). The For protease activity; shared with dimeric partner role is filled by Asp-536. Dimerization of protease regions lie at residues 560 to 566 and 599 to 611; these read GIGGFIN and NILATLGMSLNLP. A Reverse transcriptase domain is found at 655 to 845; the sequence is GQLEEAPPTN…PFQWMGYELW (191 aa). Mg(2+)-binding residues include Asp-720, Asp-795, and Asp-796. The RT 'primer grip' stretch occupies residues 837 to 845; the sequence is FQWMGYELW. The Tryptophan repeat motif motif lies at 1007-1023; that stretch reads WEQWWDNYWQVTWVPEW. An RNase H type-1 domain is found at 1043–1166; it reads IPGTETFYTD…VDHLVSQGIR (124 aa). Mg(2+) contacts are provided by Asp-1052, Glu-1087, Asp-1107, and Asp-1158. Residues 1172–1213 form an Integrase-type zinc finger; sequence EKIEPAQEEHEKYHSNIKELTHKFGIPQLVARQIVNTCAQCQ. Zn(2+) contacts are provided by His-1181, His-1185, Cys-1209, and Cys-1212. In terms of domain architecture, Integrase catalytic spans 1223–1374; sequence VNAEIGVWQM…PAERLINMIT (152 aa). Mg(2+) contacts are provided by Asp-1233, Asp-1285, and Glu-1321. A DNA-binding region (integrase-type) is located at residues 1392 to 1439; the sequence is FQVYYREGRDQLWKGPGELLWKGDGAVIVKVGADIKVVPRRKAKIIRD.

Homotrimer; further assembles as hexamers of trimers. Interacts with gp41 (via C-terminus). Interacts with host CALM1; this interaction induces a conformational change in the Matrix protein, triggering exposure of the myristate group. Interacts with host AP3D1; this interaction allows the polyprotein trafficking to multivesicular bodies during virus assembly. Part of the pre-integration complex (PIC) which is composed of viral genome, matrix protein, Vpr and integrase. In terms of assembly, homodimer; the homodimer further multimerizes as homohexamers or homopentamers. Interacts with human PPIA/CYPA. Interacts with human NUP153. Interacts with host PDZD8; this interaction stabilizes the capsid. Interacts with monkey TRIM5; this interaction destabilizes the capsid. As to quaternary structure, homodimer, whose active site consists of two apposed aspartic acid residues. Heterodimer of p66 RT and p51 RT (RT p66/p51). Heterodimerization of RT is essential for DNA polymerase activity. The overall folding of the subdomains is similar in p66 RT and p51 RT but the spatial arrangements of the subdomains are dramatically different. In terms of assembly, homotetramer; may further associate as a homohexadecamer. Part of the pre-integration complex (PIC) which is composed of viral genome, matrix protein, Vpr and integrase. Interacts with human SMARCB1/INI1 and human PSIP1/LEDGF isoform 1. Interacts with human KPNA3; this interaction might play a role in nuclear import of the pre-integration complex. Interacts with human NUP153; this interaction might play a role in nuclear import of the pre-integration complex. It depends on Mg(2+) as a cofactor. In terms of processing, specific enzymatic cleavages by the viral protease yield mature proteins. The protease is released by autocatalytic cleavage. The polyprotein is cleaved during and after budding, this process is termed maturation. Proteolytic cleavage of p66 RT removes the RNase H domain to yield the p51 RT subunit. Nucleocapsid protein p7 might be further cleaved after virus entry.

It localises to the host cell membrane. It is found in the host endosome. The protein resides in the host multivesicular body. The protein localises to the virion membrane. Its subcellular location is the host nucleus. It localises to the host cytoplasm. It is found in the virion. The enzyme catalyses Endopeptidase for which the P1 residue is preferably hydrophobic.. It catalyses the reaction Endohydrolysis of RNA in RNA/DNA hybrids. Three different cleavage modes: 1. sequence-specific internal cleavage of RNA. Human immunodeficiency virus type 1 and Moloney murine leukemia virus enzymes prefer to cleave the RNA strand one nucleotide away from the RNA-DNA junction. 2. RNA 5'-end directed cleavage 13-19 nucleotides from the RNA end. 3. DNA 3'-end directed cleavage 15-20 nucleotides away from the primer terminus.. It carries out the reaction 3'-end directed exonucleolytic cleavage of viral RNA-DNA hybrid.. The catalysed reaction is DNA(n) + a 2'-deoxyribonucleoside 5'-triphosphate = DNA(n+1) + diphosphate. Protease: The viral protease is inhibited by many synthetic protease inhibitors (PIs), such as amprenavir, atazanavir, indinavir, loprinavir, nelfinavir, ritonavir and saquinavir. Use of protease inhibitors in tritherapy regimens permit more ambitious therapeutic strategies. Reverse transcriptase/ribonuclease H: RT can be inhibited either by nucleoside RT inhibitors (NRTIs) or by non nucleoside RT inhibitors (NNRTIs). NRTIs act as chain terminators, whereas NNRTIs inhibit DNA polymerization by binding a small hydrophobic pocket near the RT active site and inducing an allosteric change in this region. Classical NRTIs are abacavir, adefovir (PMEA), didanosine (ddI), lamivudine (3TC), stavudine (d4T), tenofovir (PMPA), zalcitabine (ddC), and zidovudine (AZT). Classical NNRTIs are atevirdine (BHAP U-87201E), delavirdine, efavirenz (DMP-266), emivirine (I-EBU), and nevirapine (BI-RG-587). The tritherapies used as a basic effective treatment of AIDS associate two NRTIs and one NNRTI. In terms of biological role, mediates, with Gag polyprotein, the essential events in virion assembly, including binding the plasma membrane, making the protein-protein interactions necessary to create spherical particles, recruiting the viral Env proteins, and packaging the genomic RNA via direct interactions with the RNA packaging sequence (Psi). Gag-Pol polyprotein may regulate its own translation, by the binding genomic RNA in the 5'-UTR. At low concentration, the polyprotein would promote translation, whereas at high concentration, the polyprotein would encapsidate genomic RNA and then shut off translation. Its function is as follows. Targets the polyprotein to the plasma membrane via a multipartite membrane-binding signal, that includes its myristoylated N-terminus. Matrix protein is part of the pre-integration complex. Implicated in the release from host cell mediated by Vpu. Binds to RNA. Forms the conical core that encapsulates the genomic RNA-nucleocapsid complex in the virion. Most core are conical, with only 7% tubular. The core is constituted by capsid protein hexamer subunits. The core is disassembled soon after virion entry. Host restriction factors such as TRIM5-alpha or TRIMCyp bind retroviral capsids and cause premature capsid disassembly, leading to blocks in reverse transcription. Capsid restriction by TRIM5 is one of the factors which restricts HIV-1 to the human species. Host PIN1 apparently facilitates the virion uncoating. On the other hand, interactions with PDZD8 or CYPA stabilize the capsid. Functionally, encapsulates and protects viral dimeric unspliced genomic RNA (gRNA). Binds these RNAs through its zinc fingers. Acts as a nucleic acid chaperone which is involved in rearangement of nucleic acid secondary structure during gRNA retrotranscription. Also facilitates template switch leading to recombination. As part of the polyprotein, participates in gRNA dimerization, packaging, tRNA incorporation and virion assembly. In terms of biological role, aspartyl protease that mediates proteolytic cleavages of Gag and Gag-Pol polyproteins during or shortly after the release of the virion from the plasma membrane. Cleavages take place as an ordered, step-wise cascade to yield mature proteins. This process is called maturation. Displays maximal activity during the budding process just prior to particle release from the cell. Also cleaves Nef and Vif, probably concomitantly with viral structural proteins on maturation of virus particles. Hydrolyzes host EIF4GI and PABP1 in order to shut off the capped cellular mRNA translation. The resulting inhibition of cellular protein synthesis serves to ensure maximal viral gene expression and to evade host immune response. Its function is as follows. Multifunctional enzyme that converts the viral RNA genome into dsDNA in the cytoplasm, shortly after virus entry into the cell. This enzyme displays a DNA polymerase activity that can copy either DNA or RNA templates, and a ribonuclease H (RNase H) activity that cleaves the RNA strand of RNA-DNA heteroduplexes in a partially processive 3' to 5' endonucleasic mode. Conversion of viral genomic RNA into dsDNA requires many steps. A tRNA(3)-Lys binds to the primer-binding site (PBS) situated at the 5'-end of the viral RNA. RT uses the 3' end of the tRNA primer to perform a short round of RNA-dependent minus-strand DNA synthesis. The reading proceeds through the U5 region and ends after the repeated (R) region which is present at both ends of viral RNA. The portion of the RNA-DNA heteroduplex is digested by the RNase H, resulting in a ssDNA product attached to the tRNA primer. This ssDNA/tRNA hybridizes with the identical R region situated at the 3' end of viral RNA. This template exchange, known as minus-strand DNA strong stop transfer, can be either intra- or intermolecular. RT uses the 3' end of this newly synthesized short ssDNA to perform the RNA-dependent minus-strand DNA synthesis of the whole template. RNase H digests the RNA template except for two polypurine tracts (PPTs) situated at the 5'-end and near the center of the genome. It is not clear if both polymerase and RNase H activities are simultaneous. RNase H probably can proceed both in a polymerase-dependent (RNA cut into small fragments by the same RT performing DNA synthesis) and a polymerase-independent mode (cleavage of remaining RNA fragments by free RTs). Secondly, RT performs DNA-directed plus-strand DNA synthesis using the PPTs that have not been removed by RNase H as primers. PPTs and tRNA primers are then removed by RNase H. The 3' and 5' ssDNA PBS regions hybridize to form a circular dsDNA intermediate. Strand displacement synthesis by RT to the PBS and PPT ends produces a blunt ended, linear dsDNA copy of the viral genome that includes long terminal repeats (LTRs) at both ends. Catalyzes viral DNA integration into the host chromosome, by performing a series of DNA cutting and joining reactions. This enzyme activity takes place after virion entry into a cell and reverse transcription of the RNA genome in dsDNA. The first step in the integration process is 3' processing. This step requires a complex comprising the viral genome, matrix protein, Vpr and integrase. This complex is called the pre-integration complex (PIC). The integrase protein removes 2 nucleotides from each 3' end of the viral DNA, leaving recessed CA OH's at the 3' ends. In the second step, the PIC enters cell nucleus. This process is mediated through integrase and Vpr proteins, and allows the virus to infect a non dividing cell. This ability to enter the nucleus is specific of lentiviruses, other retroviruses cannot and rely on cell division to access cell chromosomes. In the third step, termed strand transfer, the integrase protein joins the previously processed 3' ends to the 5' ends of strands of target cellular DNA at the site of integration. The 5'-ends are produced by integrase-catalyzed staggered cuts, 5 bp apart. A Y-shaped, gapped, recombination intermediate results, with the 5'-ends of the viral DNA strands and the 3' ends of target DNA strands remaining unjoined, flanking a gap of 5 bp. The last step is viral DNA integration into host chromosome. This involves host DNA repair synthesis in which the 5 bp gaps between the unjoined strands are filled in and then ligated. Since this process occurs at both cuts flanking the HIV genome, a 5 bp duplication of host DNA is produced at the ends of HIV-1 integration. Alternatively, Integrase may catalyze the excision of viral DNA just after strand transfer, this is termed disintegration. In Human immunodeficiency virus type 2 subtype A (isolate D194) (HIV-2), this protein is Gag-Pol polyprotein (gag-pol).